Reading from the N-terminus, the 392-residue chain is Lipid-A-disaccharide synthase (392 aa).

The protein belongs to the LpxB family.

The catalysed reaction is a lipid X + a UDP-2-N,3-O-bis[(3R)-3-hydroxyacyl]-alpha-D-glucosamine = a lipid A disaccharide + UDP + H(+). It participates in bacterial outer membrane biogenesis; LPS lipid A biosynthesis. In terms of biological role, condensation of UDP-2,3-diacylglucosamine and 2,3-diacylglucosamine-1-phosphate to form lipid A disaccharide, a precursor of lipid A, a phosphorylated glycolipid that anchors the lipopolysaccharide to the outer membrane of the cell. This Syntrophotalea carbinolica (strain DSM 2380 / NBRC 103641 / GraBd1) (Pelobacter carbinolicus) protein is Lipid-A-disaccharide synthase.